A 428-amino-acid polypeptide reads, in one-letter code: Divergent protein kinase domain 1A (428 aa).

The Cytoplasmic portion of the chain corresponds to 1 to 27; the sequence is MARSLCAGAWLRKPHYLQARLSYMRVK. Residues 28–48 traverse the membrane as a helical segment; sequence YLFFSWLVVFVGSWIIYVQYS. Over 49 to 428 the chain is Lumenal; sequence TYTELCRGKD…WKKISYTNDS (380 aa).

It belongs to the DIPK family. In terms of processing, among the many cysteines in the lumenal domain, most are probably involved in disulfide bonds. As to expression, ubiquitous.

The protein localises to the endoplasmic reticulum membrane. This is Divergent protein kinase domain 1A (Dipk1a) from Mus musculus (Mouse).